Consider the following 829-residue polypeptide: Receptor-type tyrosine-protein phosphatase alpha (829 aa).

A signal peptide spans 1–19 (MDSWFILVLFGSGLIHVSA). Over 20-142 (NNATTVSPSL…ETFPPADETP (123 aa)) the chain is Extracellular. 8 N-linked (GlcNAc...) asparagine glycosylation sites follow: N21, N47, N51, N68, N80, N86, N104, and N124. A disordered region spans residues 79-106 (VNSSHSDNGTRRAASTESGGTTISPNGS). Residues 143–166 (IIAVMVALSSLLVIVFIIIVLYML) form a helical membrane-spanning segment. Residues 167-829 (RFKKYKQAGS…DAFSDYANFK (663 aa)) lie on the Cytoplasmic side of the membrane. S202 and S204 each carry phosphoserine. Tyrosine-protein phosphatase domains follow at residues 232-528 (FREE…LLEH) and 560-818 (LEEE…VQEY). Substrate-binding positions include D437, 469–475 (CSAGVGR), and Q513. The active-site Phosphocysteine intermediate is the C469. Catalysis depends on C759, which acts as the Phosphocysteine intermediate. The residue at position 825 (Y825) is a Phosphotyrosine.

It belongs to the protein-tyrosine phosphatase family. Receptor class 4 subfamily. As to quaternary structure, part of a complex comprised of PTPRA, BCAR1, BCAR3 (via SH2 domain), and SRC. Within the complex, interacts (when phosphorylated on Tyr-825) with BCAR3 (via SH2 domain). Interacts with GRB2. In terms of processing, integrin binding to extracellular matrix induces phosphorylation at Tyr-825 which induces PTPRA localization and recruitment of BCAR3, BCAR1 and CRK to focal adhesions. As to expression, widely expressed. Highest expression in brain and kidney.

Its subcellular location is the cell membrane. It is found in the cell junction. The protein localises to the focal adhesion. The catalysed reaction is O-phospho-L-tyrosyl-[protein] + H2O = L-tyrosyl-[protein] + phosphate. In terms of biological role, tyrosine protein phosphatase which is involved in integrin-mediated focal adhesion formation. Following integrin engagement, specifically recruits BCAR3, BCAR1 and CRK to focal adhesions thereby promoting SRC-mediated phosphorylation of BRAC1 and the subsequent activation of PAK and small GTPase RAC1 and CDC42. This chain is Receptor-type tyrosine-protein phosphatase alpha (Ptpra), found in Mus musculus (Mouse).